The primary structure comprises 123 residues: Histone H2B 2 (123 aa).

Residues 1 to 32 (MAPPKPSAKGAKKAAKTVTKPKDGKKRRHARK) are disordered. Ser-110 carries O-linked (GlcNAc) serine glycosylation. Residue Lys-118 forms a Glycyl lysine isopeptide (Lys-Gly) (interchain with G-Cter in ubiquitin) linkage.

This sequence belongs to the histone H2B family. The nucleosome is a histone octamer containing two molecules each of H2A, H2B, H3 and H4 assembled in one H3-H4 heterotetramer and two H2A-H2B heterodimers. The octamer wraps approximately 147 bp of DNA. In terms of processing, monoubiquitination of Lys-118 gives a specific tag for epigenetic transcriptional activation and is also prerequisite for histone H3 'Lys-4' and 'Lys-79' methylation. GlcNAcylation at Ser-110 promotes monoubiquitination of Lys-118. It fluctuates in response to extracellular glucose, and associates with transcribed genes.

It is found in the nucleus. Its subcellular location is the chromosome. Its function is as follows. Core component of nucleosome. Nucleosomes wrap and compact DNA into chromatin, limiting DNA accessibility to the cellular machineries which require DNA as a template. Histones thereby play a central role in transcription regulation, DNA repair, DNA replication and chromosomal stability. DNA accessibility is regulated via a complex set of post-translational modifications of histones, also called histone code, and nucleosome remodeling. The sequence is that of Histone H2B 2 (his-4) from Caenorhabditis elegans.